The sequence spans 256 residues: V-type proton ATPase subunit D (256 aa).

The segment covering 211–230 has biased composition (basic and acidic residues); it reads QNETAKLDAEMKLKRDRAEQ. Residues 211-256 form a disordered region; that stretch reads QNETAKLDAEMKLKRDRAEQDASEVAADEEPQGETLVADQEDDVIF.

Belongs to the V-ATPase D subunit family. In terms of assembly, V-ATPase is a heteromultimeric enzyme composed of a peripheral catalytic V1 complex (components A to H) attached to an integral membrane V0 proton pore complex (components: a, c, c', c'', d, e, f and VOA1). Interacts with RAV1 and RAV2 components of the RAVE complex, which are essential for the stability and assembly of V-ATPase.

The protein localises to the vacuole membrane. Functionally, subunit of the V1 complex of vacuolar(H+)-ATPase (V-ATPase), a multisubunit enzyme composed of a peripheral complex (V1) that hydrolyzes ATP and a membrane integral complex (V0) that translocates protons. V-ATPase is responsible for acidifying and maintaining the pH of intracellular compartments. The polypeptide is V-type proton ATPase subunit D (Saccharomyces cerevisiae (strain ATCC 204508 / S288c) (Baker's yeast)).